Consider the following 679-residue polypeptide: Penicillin-binding protein PbpB (679 aa).

Residues 1 to 74 are disordered; that stretch reads MSRAAPRRAS…STRARRTRQV (74 aa). Over 1–90 the chain is Cytoplasmic; it reads MSRAAPRRAS…GASFVFRHRT (90 aa). The span at 42 to 54 shows a compositional bias: polar residues; it reads ARQAQEATKSRPA. Residues 91–111 form a helical membrane-spanning segment; sequence GNAVILVLMLVAATQLFFLQV. Residues 112–679 lie on the Extracellular side of the membrane; that stretch reads SHAAGLRAQA…PGPPLVLQAT (568 aa). S386 (acyl-ester intermediate) is an active-site residue.

The protein belongs to the transpeptidase family. As to quaternary structure, interacts with Wag31. Post-translationally, cleaved by Rip1 in response to oxidative stress (H(2)O(2)), prevented by Wag31. Cleavage probably occurs near residues 102-103.

It is found in the cell membrane. The protein operates within cell wall biogenesis; peptidoglycan biosynthesis. Functionally, synthesis of cross-linked peptidoglycan from the lipid intermediates. The polypeptide is Penicillin-binding protein PbpB (pbpB) (Mycobacterium tuberculosis (strain ATCC 25618 / H37Rv)).